A 773-amino-acid chain; its full sequence is ATP-dependent zinc metalloprotease YME1L1 (773 aa).

At 1–295 the chain is on the mitochondrial matrix side; sequence MFSLSSTVQP…TNDSLRRTRL (295 aa). Residues 296 to 316 traverse the membrane as a helical segment; it reads ILFVLLLFGIYGLLKNPFLSV. Over 317–773 the chain is Mitochondrial intermembrane; the sequence is RFRTTTGLDS…VLEGKKLEVR (457 aa). ATP is bound by residues valine 341, threonine 383, glycine 384, lysine 385, threonine 386, and leucine 387. Histidine 599 serves as a coordination point for Zn(2+). Glutamate 600 is a catalytic residue. Histidine 603 and aspartate 677 together coordinate Zn(2+).

It in the N-terminal section; belongs to the AAA ATPase family. The protein in the C-terminal section; belongs to the peptidase M41 family. As to quaternary structure, homohexamer; may also form heterohexamers. Exists in several complexes of 600-1100 kDa. Interacts with AFG1L. It depends on Zn(2+) as a cofactor. Proteolytically processed by mitochondrial processing peptidase (MPP) to generate the mature form. Degraded in an OMA1-dependent manner in response to oxidative stress. High expression in cardiac and skeletal muscle mitochondria.

It is found in the mitochondrion inner membrane. The protein resides in the mitochondrion. It catalyses the reaction ATP + H2O = ADP + phosphate + H(+). Functionally, ATP-dependent metalloprotease that catalyzes the degradation of folded and unfolded proteins with a suitable degron sequence in the mitochondrial intermembrane region. Plays an important role in regulating mitochondrial morphology and function by cleaving OPA1 at position S2, giving rise to a form of OPA1 that promotes maintenance of normal mitochondrial structure and mitochondrial protein metabolism. Ensures cell proliferation, maintains normal cristae morphology and complex I respiration activity, promotes antiapoptotic activity and protects mitochondria from the accumulation of oxidatively damaged membrane proteins. Required to control the accumulation of nonassembled respiratory chain subunits (NDUFB6, OX4 and ND1). Involved in the mitochondrial adaptation in response to various signals, such as stress or developmental cues, by mediating degradation of mitochondrial proteins to rewire the mitochondrial proteome. Catalyzes degradation of mitochondrial proteins, such as translocases, lipid transfer proteins and metabolic enzymes in response to nutrient starvation in order to limit mitochondrial biogenesis: mechanistically, YME1L is activated by decreased phosphatidylethanolamine levels caused by LPIN1 activity in response to mTORC1 inhibition. Acts as a regulator of adult neural stem cell self-renewal by promoting mitochondrial proteome rewiring, preserving neural stem and progenitor cells self-renewal. Required for normal, constitutive degradation of PRELID1. Catalyzes the degradation of OMA1 in response to membrane depolarization. Mediates degradation of TIMM17A downstream of the integrated stress response (ISR). Catalyzes degradation of MICU1 when MICU1 is not assembled via an interchain disulfide. The protein is ATP-dependent zinc metalloprotease YME1L1 (YME1L1) of Homo sapiens (Human).